We begin with the raw amino-acid sequence, 512 residues long: Photosystem II CP47 reaction center protein (512 aa).

Transmembrane regions (helical) follow at residues 21 to 36 (AVHLMHTALVSGWAGS), 101 to 115 (IVLSGLLFLAAIWHW), 140 to 156 (GIHLFLSGVLCFAFGAF), 203 to 218 (IAAGILGILAGLFHLS), 237 to 252 (VLSSSIAAVFFAAFVV), and 457 to 472 (TFALLFFFGHIWHGAR).

This sequence belongs to the PsbB/PsbC family. PsbB subfamily. As to quaternary structure, PSII is composed of 1 copy each of membrane proteins PsbA, PsbB, PsbC, PsbD, PsbE, PsbF, PsbH, PsbI, PsbJ, PsbK, PsbL, PsbM, PsbT, PsbX, PsbY, PsbZ, Psb30/Ycf12, at least 3 peripheral proteins of the oxygen-evolving complex and a large number of cofactors. It forms dimeric complexes. Requires Binds multiple chlorophylls. PSII binds additional chlorophylls, carotenoids and specific lipids. as cofactor.

Its subcellular location is the plastid. The protein resides in the chloroplast thylakoid membrane. Its function is as follows. One of the components of the core complex of photosystem II (PSII). It binds chlorophyll and helps catalyze the primary light-induced photochemical processes of PSII. PSII is a light-driven water:plastoquinone oxidoreductase, using light energy to abstract electrons from H(2)O, generating O(2) and a proton gradient subsequently used for ATP formation. The sequence is that of Photosystem II CP47 reaction center protein from Physcomitrium patens (Spreading-leaved earth moss).